Here is a 70-residue protein sequence, read N- to C-terminus: Large ribosomal subunit protein bL31 (70 aa).

Zn(2+)-binding residues include cysteine 16, cysteine 18, cysteine 37, and cysteine 40.

The protein belongs to the bacterial ribosomal protein bL31 family. Type A subfamily. In terms of assembly, part of the 50S ribosomal subunit. Zn(2+) serves as cofactor.

In terms of biological role, binds the 23S rRNA. This Alteromonas mediterranea (strain DSM 17117 / CIP 110805 / LMG 28347 / Deep ecotype) protein is Large ribosomal subunit protein bL31.